The following is a 591-amino-acid chain: uncharacterized protein (591 aa).

The span at 1–10 (MSIRGVGGNG) shows a compositional bias: gly residues. Disordered regions lie at residues 1-37 (MSIR…KVED), 110-135 (RSSA…GYRE), 324-344 (EESG…AQGP), and 487-517 (GHYQ…TPPL). The segment covering 11–32 (NSRIPSHNGDGSNRRSQNTKGN) has biased composition (polar residues). A compositionally biased stretch (low complexity) spans 110–132 (RSSATRAAESGSSSRTARGASSG). A compositionally biased stretch (basic and acidic residues) spans 490 to 507 (QDPRASDYDLPRASDYDL).

The protein to C.muridarum TC_0268.

This is an uncharacterized protein from Chlamydia trachomatis serovar D (strain ATCC VR-885 / DSM 19411 / UW-3/Cx).